The chain runs to 357 residues: U3 small nucleolar ribonucleoprotein protein LCP5 (357 aa).

The residue at position 2 (Ser-2) is an N-acetylserine. Disordered stretches follow at residues 146–211 and 301–357; these read STLV…YKPP and NKAE…QRRL. A compositionally biased stretch (acidic residues) spans 155-166; it reads DDSEDDESSEDE. A compositionally biased stretch (polar residues) spans 171–183; that stretch reads PNTSGIINTNKKS. Composition is skewed to basic and acidic residues over residues 187-196 and 348-357; these read RVEETAKQEN and SAWDRAQRRL.

The protein localises to the nucleus. It localises to the nucleolus. Functionally, component of the U3 small nucleolar ribonucleoprotein. Required for the early cleavages at sites A0, A1 and A2 of the pre-ribosomal RNA. Participates in ribosome biogenesis. The chain is U3 small nucleolar ribonucleoprotein protein LCP5 (LCP5) from Saccharomyces cerevisiae (strain ATCC 204508 / S288c) (Baker's yeast).